The sequence spans 237 residues: Ribonuclease PH (237 aa).

Phosphate-binding positions include arginine 86 and glycine 124 to arginine 126.

This sequence belongs to the RNase PH family. In terms of assembly, homohexameric ring arranged as a trimer of dimers.

The catalysed reaction is tRNA(n+1) + phosphate = tRNA(n) + a ribonucleoside 5'-diphosphate. Functionally, phosphorolytic 3'-5' exoribonuclease that plays an important role in tRNA 3'-end maturation. Removes nucleotide residues following the 3'-CCA terminus of tRNAs; can also add nucleotides to the ends of RNA molecules by using nucleoside diphosphates as substrates, but this may not be physiologically important. Probably plays a role in initiation of 16S rRNA degradation (leading to ribosome degradation) during starvation. The polypeptide is Ribonuclease PH (Cereibacter sphaeroides (strain ATCC 17029 / ATH 2.4.9) (Rhodobacter sphaeroides)).